The following is a 230-amino-acid chain: MTLLIRDVPQTERPRERFIREGAKALSNQEIVAILLRTGTKQSSALHVASTLLSQFPTLAMFSEAPLEEIQKVPGIGMAKAIELSAAIELGRRIQRETKLVRPVISSPEDAAELVSEDMRGLQQEHFVALYLNTKNHVIKQKTLFIGSLNASIVHPREVFKEALQSSSASVICLHNHPSGDPSPSPEDISVTKRLRQAGAILGIELLDHIIVGDGCFISLKERGFFATIS.

An MPN domain is found at 104–226 (VISSPEDAAE…FISLKERGFF (123 aa)). Residues H175, H177, and D188 each coordinate Zn(2+). Positions 175–188 (HNHPSGDPSPSPED) match the JAMM motif motif.

This sequence belongs to the UPF0758 family.

This Shouchella clausii (strain KSM-K16) (Alkalihalobacillus clausii) protein is UPF0758 protein ABC2615.